The chain runs to 346 residues: Partitioning defective 6 homolog alpha (346 aa).

The interval 1-116 is interaction with PRKCI and PRKCZ; that stretch reads MARPQRTPAR…SNSLQRRKKG (116 aa). Positions 15 to 95 constitute a PB1 domain; sequence IVEVKSKFDA…PPLRLLVQKR (81 aa). The interval 126–253 is interaction with PARD3 and CDC42; that stretch reads RTRPPLLISL…VTVKPANQRN (128 aa). The Pseudo-CRIB domain maps to 133 to 150; that stretch reads ISLPQDFRQVSSVIDVDL. In terms of domain architecture, PDZ spans 157 to 250; that stretch reads RVRLHKHGSD…NLIVTVKPAN (94 aa). Disordered stretches follow at residues 257-294 and 317-346; these read RGASGRLTGPSSVGPGPTDPDSDDDNSDPVIENRHPPC and GSSLPSLDSREQANSGWGNGMRGDVSGFSL. A Phosphoserine modification is found at serine 278. Residues 317–332 are compositionally biased toward polar residues; that stretch reads GSSLPSLDSREQANSG. Serine 345 is modified (phosphoserine).

The protein belongs to the PAR6 family. Interacts with PALS1 and CRB3. Interacts with PARD3. Interacts with GTP-bound forms of CDC42, RHOQ/TC10 and RAC1. Interacts with the N-terminal part of PRKCI and PRKCZ. Part of a complex with PARD3, CDC42 or RAC1 and PRKCI or PRKCZ. Part of a complex with LLGL1 and PRKCI. Interacts with MAP2K5. Interacts with TGFBR1; involved in TGF-beta induced epithelial to mesenchymal transition. Interacts with ECT2 ('Thr-359' phosphorylated form) and PRKCI. Interacts with DCTN1 and PCM1. In terms of processing, phosphorylated by the TGF-beta receptor. Post-translationally, ubiquitinated by the SCF(FBXO31) complex, leading to its proteasomal degradation.

The protein resides in the cytoplasm. The protein localises to the cell membrane. It localises to the cell junction. It is found in the tight junction. Its subcellular location is the cytoskeleton. The protein resides in the microtubule organizing center. The protein localises to the centrosome. It localises to the centriolar satellite. In terms of biological role, adapter protein involved in asymmetrical cell division and cell polarization processes. Probably involved in the formation of epithelial tight junctions. Association with PARD3 may prevent the interaction of PARD3 with F11R/JAM1, thereby preventing tight junction assembly. The PARD6-PARD3 complex links GTP-bound Rho small GTPases to atypical protein kinase C proteins. Regulates centrosome organization and function. Essential for the centrosomal recruitment of key proteins that control centrosomal microtubule organization. The sequence is that of Partitioning defective 6 homolog alpha (Pard6a) from Rattus norvegicus (Rat).